The following is a 151-amino-acid chain: Large ribosomal subunit protein bL9 (151 aa).

This sequence belongs to the bacterial ribosomal protein bL9 family.

Binds to the 23S rRNA. The chain is Large ribosomal subunit protein bL9 from Lactobacillus helveticus (strain DPC 4571).